Here is a 409-residue protein sequence, read N- to C-terminus: Outer membrane protein assembly factor BamB (409 aa).

The N-terminal stretch at 1–34 (MAGNILLLILDYVFHAGSRTLRVCILSLLILLSG) is a signal peptide. Residue Cys-35 is the site of N-palmitoyl cysteine attachment. Residue Cys-35 is the site of S-diacylglycerol cysteine attachment.

Belongs to the BamB family. In terms of assembly, part of the Bam complex.

Its subcellular location is the cell outer membrane. In terms of biological role, part of the outer membrane protein assembly complex, which is involved in assembly and insertion of beta-barrel proteins into the outer membrane. The chain is Outer membrane protein assembly factor BamB from Nitrosomonas eutropha (strain DSM 101675 / C91 / Nm57).